The following is a 247-amino-acid chain: 1-(5-phosphoribosyl)-5-[(5-phosphoribosylamino)methylideneamino] imidazole-4-carboxamide isomerase (247 aa).

Residue Asp8 is the Proton acceptor of the active site. The active-site Proton donor is the Asp129.

It belongs to the HisA/HisF family.

The protein resides in the cytoplasm. It catalyses the reaction 1-(5-phospho-beta-D-ribosyl)-5-[(5-phospho-beta-D-ribosylamino)methylideneamino]imidazole-4-carboxamide = 5-[(5-phospho-1-deoxy-D-ribulos-1-ylimino)methylamino]-1-(5-phospho-beta-D-ribosyl)imidazole-4-carboxamide. It participates in amino-acid biosynthesis; L-histidine biosynthesis; L-histidine from 5-phospho-alpha-D-ribose 1-diphosphate: step 4/9. In Rhodospirillum centenum (strain ATCC 51521 / SW), this protein is 1-(5-phosphoribosyl)-5-[(5-phosphoribosylamino)methylideneamino] imidazole-4-carboxamide isomerase.